The following is a 95-amino-acid chain: Large ribosomal subunit protein uL23 (95 aa).

Belongs to the universal ribosomal protein uL23 family. As to quaternary structure, part of the 50S ribosomal subunit. Contacts protein L29, and trigger factor when it is bound to the ribosome.

Functionally, one of the early assembly proteins it binds 23S rRNA. One of the proteins that surrounds the polypeptide exit tunnel on the outside of the ribosome. Forms the main docking site for trigger factor binding to the ribosome. In Shouchella clausii (strain KSM-K16) (Alkalihalobacillus clausii), this protein is Large ribosomal subunit protein uL23.